Reading from the N-terminus, the 174-residue chain is MPKLWDAVAGFAVTFGTLFKKPITEEYPEKPGPVAPRYHGRHQLNRYPDGLEKCIGCELCAWACPADAIYVEGDDNTADERYSPGERYGRVYQINYLRCIGCGLCIEACPTRALTMTNDYEMADDNRADLIWGKDKLLAPLQDGMLAPPHPMAPGATDDDYYLGRIGPVTEDVR.

4Fe-4S ferredoxin-type domains follow at residues 44 to 74 and 90 to 119; these read LNRYPDGLEKCIGCELCAWACPADAIYVEGD and RVYQINYLRCIGCGLCIEACPTRALTMTND. Residues Cys54, Cys57, Cys60, Cys64, Cys99, Cys102, Cys105, and Cys109 each coordinate [4Fe-4S] cluster.

The protein belongs to the complex I 23 kDa subunit family. NDH-1 is composed of 14 different subunits. Subunits NuoA, H, J, K, L, M, N constitute the membrane sector of the complex. [4Fe-4S] cluster is required as a cofactor.

Its subcellular location is the cell membrane. The catalysed reaction is a quinone + NADH + 5 H(+)(in) = a quinol + NAD(+) + 4 H(+)(out). NDH-1 shuttles electrons from NADH, via FMN and iron-sulfur (Fe-S) centers, to quinones in the respiratory chain. The immediate electron acceptor for the enzyme in this species is believed to be menaquinone. Couples the redox reaction to proton translocation (for every two electrons transferred, four hydrogen ions are translocated across the cytoplasmic membrane), and thus conserves the redox energy in a proton gradient. The protein is NADH-quinone oxidoreductase subunit I of Mycobacterium sp. (strain JLS).